We begin with the raw amino-acid sequence, 59 residues long: MAGRNKAKPRLSKKEKEERRKDMAEVQEKVFSVVVPVVVAFTVVIMLIVYLKTRPRTDF.

Basic residues predominate over residues 1-11 (MAGRNKAKPRL). Positions 1–20 (MAGRNKAKPRLSKKEKEERR) are disordered. Residues 10 to 30 (RLSKKEKEERRKDMAEVQEKV) are a coiled coil. A helical transmembrane segment spans residues 30–50 (VFSVVVPVVVAFTVVIMLIVY).

This sequence belongs to the SMCO4 family.

The protein resides in the membrane. The polypeptide is Single-pass membrane and coiled-coil domain-containing protein 4 homolog (Argas monolakensis (Mono lake bird tick)).